Reading from the N-terminus, the 298-residue chain is Acetylglutamate kinase (298 aa).

Residues 69–70 (GG), arginine 91, and asparagine 191 contribute to the substrate site.

It belongs to the acetylglutamate kinase family. ArgB subfamily.

It localises to the cytoplasm. It catalyses the reaction N-acetyl-L-glutamate + ATP = N-acetyl-L-glutamyl 5-phosphate + ADP. Its pathway is amino-acid biosynthesis; L-arginine biosynthesis; N(2)-acetyl-L-ornithine from L-glutamate: step 2/4. Catalyzes the ATP-dependent phosphorylation of N-acetyl-L-glutamate. The sequence is that of Acetylglutamate kinase from Neisseria meningitidis serogroup A / serotype 4A (strain DSM 15465 / Z2491).